We begin with the raw amino-acid sequence, 265 residues long: Uronate dehydrogenase (265 aa).

Residues 12–13, 32–34, 49–50, and 69–73 contribute to the NAD(+) site; these read QL, DLS, DL, and LGGIS. Residues Ser-73 and 109-111 each bind substrate; that span reads SNH. Catalysis depends on Tyr-134, which acts as the Proton acceptor. Residue Lys-138 coordinates NAD(+). A substrate-binding site is contributed by Ser-163. An NAD(+)-binding site is contributed by Cys-164. Arg-172 is a binding site for substrate.

Belongs to the NAD(P)-dependent epimerase/dehydratase family. Homohexamer.

It catalyses the reaction beta-D-galacturonate + NAD(+) = D-galactaro-1,5-lactone + NADH + H(+). The enzyme catalyses beta-D-glucuronate + NAD(+) = D-glucaro-1,5-lactone + NADH + H(+). It functions in the pathway carbohydrate acid metabolism; D-galacturonate degradation via prokaryotic oxidative pathway. Catalyzes the oxidation of D-galacturonate and D-glucuronate to galactarate and D-glucarate, respectively. In fact, in water solution the substrate D-galacturonate is predominantly in pyranosic form whose beta anomer is converted by the enzyme to D-galactaro-1,5-lactone; in solution, this reaction product rearranges to the more stable D-galactaro-1,4-lactone. Makes part of the oxidative degradation pathway of D-galacturonate, which allows A.tumefaciens to utilize D-galacturonate as a sole carbon source. Cannot use NADP(+) instead of NAD(+) as cosubstrate. Is not active on D-galactose, D-glucose, D-galactonate and D-gluconate. In Agrobacterium fabrum (strain C58 / ATCC 33970) (Agrobacterium tumefaciens (strain C58)), this protein is Uronate dehydrogenase (udh).